Here is a 525-residue protein sequence, read N- to C-terminus: DNA damage-binding protein cmr1 (525 aa).

The segment covering 34–50 (TGVFTSNMPRGTSANQS) has biased composition (polar residues). Disordered regions lie at residues 34-103 (TGVF…ERAK), 214-240 (DASQEKPTSAVKNEDDEDDEDDDDPDP), and 282-301 (TSSVEKYAPESTSDDVPISG). Basic and acidic residues predominate over residues 83 to 102 (EIAKRKADEEYDRRQEEERA). A WD 1 repeat occupies 182 to 223 (ITPERIYSMTFHPSEAKPVIFAGDKMGHLGILDASQEKPTSA). The segment covering 227–239 (EDDEDDEDDDDPD) has biased composition (acidic residues). WD repeat units lie at residues 247 to 287 (PHTR…SVEK), 339 to 379 (LSEK…HTDP), 384 to 425 (EHQS…SSWK), 448 to 491 (GRWV…LAQL), and 494 to 525 (DGITAVPAVAVFHRSKNWVAGGTASGKICLWM).

The protein belongs to the WD repeat DDB2/WDR76 family.

DNA-binding protein that binds to both single- and double-stranded DNA. Binds preferentially to UV-damaged DNA. May be involved in DNA-metabolic processes. This chain is DNA damage-binding protein cmr1, found in Emericella nidulans (strain FGSC A4 / ATCC 38163 / CBS 112.46 / NRRL 194 / M139) (Aspergillus nidulans).